The primary structure comprises 955 residues: Centrosomal protein of 112 kDa (955 aa).

A coiled-coil region spans residues 277 to 954 (QKHDADVQKI…QEELTTYQGR (678 aa)).

The protein localises to the cytoplasm. The protein resides in the cytoskeleton. It is found in the microtubule organizing center. It localises to the centrosome. The protein is Centrosomal protein of 112 kDa (CEP112) of Homo sapiens (Human).